A 236-amino-acid chain; its full sequence is Ribosomal RNA small subunit methyltransferase G (236 aa).

S-adenosyl-L-methionine is bound by residues Gly-80, 131 to 132 (AE), and Arg-148.

Belongs to the methyltransferase superfamily. RNA methyltransferase RsmG family.

The protein localises to the cytoplasm. In terms of biological role, specifically methylates the N7 position of a guanine in 16S rRNA. This chain is Ribosomal RNA small subunit methyltransferase G, found in Ureaplasma parvum serovar 3 (strain ATCC 27815 / 27 / NCTC 11736).